Here is a 198-residue protein sequence, read N- to C-terminus: Protein GrpE (198 aa).

The protein belongs to the GrpE family. As to quaternary structure, homodimer.

It localises to the cytoplasm. Functionally, participates actively in the response to hyperosmotic and heat shock by preventing the aggregation of stress-denatured proteins, in association with DnaK and GrpE. It is the nucleotide exchange factor for DnaK and may function as a thermosensor. Unfolded proteins bind initially to DnaJ; upon interaction with the DnaJ-bound protein, DnaK hydrolyzes its bound ATP, resulting in the formation of a stable complex. GrpE releases ADP from DnaK; ATP binding to DnaK triggers the release of the substrate protein, thus completing the reaction cycle. Several rounds of ATP-dependent interactions between DnaJ, DnaK and GrpE are required for fully efficient folding. This is Protein GrpE from Baumannia cicadellinicola subsp. Homalodisca coagulata.